The sequence spans 33 residues: Brevinin-2PTe (33 aa).

An intrachain disulfide couples Cys-27 to Cys-33.

As to expression, expressed by the skin glands.

The protein localises to the secreted. In terms of biological role, has antibacterial activity against the Gram-positive bacterium S.aureus ATCC 25923 (MIC=36 uM) and the Gram-negative bacterium E.coli ATCC 25726 (MIC=18 uM). The chain is Brevinin-2PTe from Pulchrana picturata (Malaysian fire frog).